The chain runs to 74 residues: Conotoxin ca17a (74 aa).

An N-terminal signal peptide occupies residues 1-20; the sequence is MQKATVLLLALLLLLPLSTA. Residues 21–40 constitute a propeptide that is removed on maturation; the sequence is QDAEGSQEDAAQREVDIATR. Pro-51 carries the post-translational modification 4-hydroxyproline.

Post-translationally, contains disulfide bonds. Expressed by the venom gland.

The protein resides in the secreted. The protein is Conotoxin ca17a of Conus caracteristicus (Characteristic cone).